The chain runs to 695 residues: WD repeat-containing protein 93 (695 aa).

Residues 1-35 are disordered; sequence MSSFKGNQAQKRRLSVFPKGPLEIPSPTEADWPKD. The WD repeat unit spans residues 421-460; the sequence is PCAAPIVMSQISSFSSYLALVCEDGVLILWDLAEGFLFGV.

As to expression, testis-specific. Expressed in spermatogonia, spermatocytes and spermatids.

The chain is WD repeat-containing protein 93 (Wdr93) from Mus musculus (Mouse).